We begin with the raw amino-acid sequence, 954 residues long: Bifunctional endo-1,4-beta-xylanase XylA (954 aa).

The or 28, or 29 signal peptide spans 1–27; it reads MKLSKIKKVLSGTVSALMIASAAPVVA. A GH11 domain is found at 29–236; it reads AADQQTRGNV…SNGSANVKSV (208 aa). Catalysis depends on E122, which acts as the Nucleophile. The Proton donor role is filled by E223. Over residues 233 to 243 the composition is skewed to polar residues; that stretch reads VKSVSVTQGGS. The tract at residues 233-628 is disordered; that stretch reads VKSVSVTQGG…NNNNSAGSSD (396 aa). A compositionally biased stretch (low complexity) spans 246–622; sequence NGGQQQNNDW…WNQGQQNNNN (377 aa). One can recognise a GH10 domain in the interval 624 to 952; sequence AGSSDSLKGA…KPAYDRVMAL (329 aa). The active-site Proton donor is E774. The active-site Nucleophile is E884.

In the N-terminal section; belongs to the glycosyl hydrolase 11 (cellulase G) family. The protein in the C-terminal section; belongs to the glycosyl hydrolase 10 (cellulase F) family.

The catalysed reaction is Endohydrolysis of (1-&gt;4)-beta-D-xylosidic linkages in xylans.. It participates in glycan degradation; xylan degradation. Xylanase domain releases more xylo-oligosaccharides and GH10 domain more xylose. The chain is Bifunctional endo-1,4-beta-xylanase XylA (xynA) from Ruminococcus flavefaciens.